The sequence spans 356 residues: Probable cysteine protease RDL6 (356 aa).

An N-terminal signal peptide occupies residues 1–26 (MGFVRPVCMTILFLLIVFVLSAPSSA). The propeptide at 27-132 (MDLPATSGGH…RRYVPLAGDQ (106 aa)) is activation peptide. 2 N-linked (GlcNAc...) asparagine glycosylation sites follow: Asn-37 and Asn-86. Cystine bridges form between Cys-154/Cys-195, Cys-188/Cys-229, and Cys-288/Cys-339. The active site involves Cys-157. Catalysis depends on residues His-294 and Asn-314.

Belongs to the peptidase C1 family.

Its function is as follows. Probable thiol protease. The protein is Probable cysteine protease RDL6 of Arabidopsis thaliana (Mouse-ear cress).